Here is a 344-residue protein sequence, read N- to C-terminus: Phosphate acyltransferase (344 aa).

This sequence belongs to the PlsX family. Homodimer. Probably interacts with PlsY.

Its subcellular location is the cytoplasm. The enzyme catalyses a fatty acyl-[ACP] + phosphate = an acyl phosphate + holo-[ACP]. It participates in lipid metabolism; phospholipid metabolism. Functionally, catalyzes the reversible formation of acyl-phosphate (acyl-PO(4)) from acyl-[acyl-carrier-protein] (acyl-ACP). This enzyme utilizes acyl-ACP as fatty acyl donor, but not acyl-CoA. This is Phosphate acyltransferase from Cyanothece sp. (strain PCC 7425 / ATCC 29141).